Reading from the N-terminus, the 59-residue chain is UPF0434 protein SO_2800 (59 aa).

The protein belongs to the UPF0434 family.

The sequence is that of UPF0434 protein SO_2800 from Shewanella oneidensis (strain ATCC 700550 / JCM 31522 / CIP 106686 / LMG 19005 / NCIMB 14063 / MR-1).